A 794-amino-acid polypeptide reads, in one-letter code: Signal transducer and activator of transcription 5A (794 aa).

Phosphotyrosine is present on Tyr-90. Phosphoserine occurs at positions 128 and 193. The SH2 domain occupies 589-686 (WNDGAILGFV…EVFSKYYTPV (98 aa)). Tyr-682 carries the phosphotyrosine modification. Tyr-694 is subject to Phosphotyrosine; by JAK2. The tract at residues 773 to 794 (DSLDSRLSPPAGLFTSARGSLS) is disordered. Ser-780 carries the phosphoserine modification.

Belongs to the transcription factor STAT family. As to quaternary structure, forms a homodimer or a heterodimer with a related family member. Binds NR3C1. Interacts with NCOA1 and SOCS7. Interacts with ERBB4. Interacts with EBF4. Interacts with CD69. Post-translationally, tyrosine phosphorylated in response to KITLG/SCF, IL2, IL3, IL7, IL15, CSF2/GMCSF, GH1, PRL, EPO and THPO. Activated KIT promotes phosphorylation on tyrosine residues and subsequent translocation to the nucleus. Tyrosine phosphorylated in response to constitutively activated FGFR1, FGFR2, FGFR3 and FGFR4. Tyrosine phosphorylation is required for DNA-binding activity and dimerization. Serine phosphorylation is also required for maximal transcriptional activity. Tyrosine phosphorylated in response to signaling via activated FLT3; wild-type FLT3 results in much weaker phosphorylation than constitutively activated mutant FLT3. Alternatively, can be phosphorylated by JAK2 at Tyr-694. In terms of processing, ISGylated.

The protein localises to the cytoplasm. It is found in the nucleus. Carries out a dual function: signal transduction and activation of transcription. Mediates cellular responses to the cytokine KITLG/SCF and other growth factors. Mediates cellular responses to ERBB4. May mediate cellular responses to activated FGFR1, FGFR2, FGFR3 and FGFR4. Binds to the GAS element and activates PRL-induced transcription. Regulates the expression of milk proteins during lactation. The protein is Signal transducer and activator of transcription 5A (STAT5A) of Homo sapiens (Human).